The primary structure comprises 236 residues: Probable calcium-binding protein CML30 (236 aa).

The interval Val43 to Leu64 is disordered. A compositionally biased stretch (basic and acidic residues) spans Lys49–Pro60. EF-hand domains follow at residues Asp59–Ala94 and Ser96–Arg131. The Ca(2+) site is built by Asp72, Asp74, Asp76, Glu83, Asp109, Asn111, Asp113, and Glu120. The tract at residues Lys130–Glu158 is disordered. Residues Ala146–Glu158 show a composition bias toward acidic residues. EF-hand domains follow at residues Glu161–Arg196 and Pro202–Ala236. Asp174, Asn176, Asp178, Glu185, Asp215, Asp217, Asp219, Met221, and Glu226 together coordinate Ca(2+).

In terms of biological role, potential calcium sensor. This Oryza sativa subsp. japonica (Rice) protein is Probable calcium-binding protein CML30 (CML30).